A 349-amino-acid polypeptide reads, in one-letter code: Outer membrane protein assembly factor BamC (349 aa).

The N-terminal stretch at 1 to 24 (MAILLQKSKVMKIAGMSLAMLLAA) is a signal peptide. The N-palmitoyl cysteine moiety is linked to residue Cys25. The S-diacylglycerol cysteine moiety is linked to residue Cys25.

Belongs to the BamC family. In terms of assembly, part of the Bam complex, which is composed of the outer membrane protein BamA, and four lipoproteins BamB, BamC, BamD and BamE.

Its subcellular location is the cell outer membrane. Its function is as follows. Part of the outer membrane protein assembly complex, which is involved in assembly and insertion of beta-barrel proteins into the outer membrane. In Photorhabdus asymbiotica subsp. asymbiotica (strain ATCC 43949 / 3105-77) (Xenorhabdus luminescens (strain 2)), this protein is Outer membrane protein assembly factor BamC.